A 119-amino-acid polypeptide reads, in one-letter code: Large ribosomal subunit protein bL20 (119 aa).

This sequence belongs to the bacterial ribosomal protein bL20 family.

Its function is as follows. Binds directly to 23S ribosomal RNA and is necessary for the in vitro assembly process of the 50S ribosomal subunit. It is not involved in the protein synthesizing functions of that subunit. The sequence is that of Large ribosomal subunit protein bL20 from Clostridium perfringens (strain ATCC 13124 / DSM 756 / JCM 1290 / NCIMB 6125 / NCTC 8237 / Type A).